We begin with the raw amino-acid sequence, 128 residues long: Cytochrome c-type biogenesis protein CcmE (128 aa).

Over 1–8 (MQKIVRNR) the chain is Cytoplasmic. The chain crosses the membrane as a helical; Signal-anchor for type II membrane protein span at residues 9-29 (LIKIIICFCSACLGISIILYN). The Periplasmic segment spans residues 30-128 (LEKNIIFFFP…KHDENYRPPS (99 aa)). Positions 120 and 124 each coordinate heme.

It belongs to the CcmE/CycJ family.

It is found in the cell inner membrane. Heme chaperone required for the biogenesis of c-type cytochromes. Transiently binds heme delivered by CcmC and transfers the heme to apo-cytochromes in a process facilitated by CcmF and CcmH. The polypeptide is Cytochrome c-type biogenesis protein CcmE (Rickettsia prowazekii (strain Madrid E)).